The chain runs to 383 residues: Acetylornithine deacetylase (383 aa).

His80 contacts Zn(2+). Asp82 is a catalytic residue. Asp112 serves as a coordination point for Zn(2+). Glu144 is an active-site residue. Zn(2+)-binding residues include Glu145, Glu169, and His355.

Belongs to the peptidase M20A family. ArgE subfamily. In terms of assembly, homodimer. It depends on Zn(2+) as a cofactor. Requires Co(2+) as cofactor. Glutathione serves as cofactor.

The protein localises to the cytoplasm. It catalyses the reaction N(2)-acetyl-L-ornithine + H2O = L-ornithine + acetate. It functions in the pathway amino-acid biosynthesis; L-arginine biosynthesis; L-ornithine from N(2)-acetyl-L-ornithine (linear): step 1/1. Functionally, catalyzes the hydrolysis of the amide bond of N(2)-acetylated L-amino acids. Cleaves the acetyl group from N-acetyl-L-ornithine to form L-ornithine, an intermediate in L-arginine biosynthesis pathway, and a branchpoint in the synthesis of polyamines. The protein is Acetylornithine deacetylase of Escherichia coli O139:H28 (strain E24377A / ETEC).